A 391-amino-acid polypeptide reads, in one-letter code: Metallophosphoesterase 1 (391 aa).

A helical transmembrane segment spans residues T25–F45. A divalent metal cation contacts are provided by D72, D114, N152, H244, H298, and H300. Residues V352 to E372 form a helical membrane-spanning segment.

This sequence belongs to the metallophosphoesterase superfamily. MPPE1 family. As to quaternary structure, interacts with GPI-anchor proteins (via the GPI portion). Interacts with TMED10. Requires Mn(2+) as cofactor.

It localises to the endoplasmic reticulum-Golgi intermediate compartment membrane. In terms of biological role, metallophosphoesterase that catalyzes the removal of a side-chain ethanolamine-phosphate (EtNP) from the second mannose of the GPI-anchor protein intermediate. Participates in the glycan remodeling steps of GPI-anchor maturation to allow an efficient transport of GPI-anchor proteins from the endoplasmic reticulum to the Golgi. This chain is Metallophosphoesterase 1, found in Cricetulus griseus (Chinese hamster).